The primary structure comprises 429 residues: Chaperone SurA (429 aa).

The N-terminal stretch at Met1–Ala19 is a signal peptide. PpiC domains are found at residues Arg172–Asp273 and Val283–Gly381.

Its subcellular location is the periplasm. The enzyme catalyses [protein]-peptidylproline (omega=180) = [protein]-peptidylproline (omega=0). Its function is as follows. Chaperone involved in the correct folding and assembly of outer membrane proteins. Recognizes specific patterns of aromatic residues and the orientation of their side chains, which are found more frequently in integral outer membrane proteins. May act in both early periplasmic and late outer membrane-associated steps of protein maturation. This Chromobacterium violaceum (strain ATCC 12472 / DSM 30191 / JCM 1249 / CCUG 213 / NBRC 12614 / NCIMB 9131 / NCTC 9757 / MK) protein is Chaperone SurA.